Reading from the N-terminus, the 261-residue chain is Hemin import ATP-binding protein HmuV (261 aa).

Residues 3–239 form the ABC transporter domain; sequence LDAADITVKL…AILSQAYGCA (237 aa). 35-42 is an ATP binding site; it reads GPNGSGKT.

Belongs to the ABC transporter superfamily. Heme (hemin) importer (TC 3.A.1.14.5) family. The complex is composed of two ATP-binding proteins (HmuV), two transmembrane proteins (HmuU) and a solute-binding protein (HmuT).

The protein localises to the cell inner membrane. Functionally, part of the ABC transporter complex HmuTUV involved in hemin import. Responsible for energy coupling to the transport system. The protein is Hemin import ATP-binding protein HmuV of Roseobacter denitrificans (strain ATCC 33942 / OCh 114) (Erythrobacter sp. (strain OCh 114)).